Reading from the N-terminus, the 192-residue chain is uncharacterized protein (192 aa).

This is an uncharacterized protein from Sinorhizobium fredii (strain NBRC 101917 / NGR234).